A 182-amino-acid chain; its full sequence is Succinate dehydrogenase cytochrome b560 subunit, mitochondrial (182 aa).

Residues Leu-65 to Leu-94 traverse the membrane as a helical segment. The Mitochondrial intermembrane portion of the chain corresponds to Pro-95–Val-114. Residues Thr-115–Phe-139 form a helical membrane-spanning segment. His-129 is a binding site for heme. The Mitochondrial matrix portion of the chain corresponds to Asp-140 to Asn-147. A helical transmembrane segment spans residues Val-148 to Ile-169. Residues Val-170–Asn-172 lie on the Mitochondrial intermembrane side of the membrane.

The protein belongs to the cytochrome b560 family. As to quaternary structure, component of complex II composed of four subunits: a flavoprotein (FP), iron-sulfur protein (IP), and a cytochrome b560 composed of two integral membrane proteins. Requires heme as cofactor.

Its subcellular location is the mitochondrion inner membrane. It functions in the pathway carbohydrate metabolism; tricarboxylic acid cycle. Its function is as follows. Membrane-anchoring subunit of succinate dehydrogenase (SDH) that is involved in complex II of the mitochondrial electron transport chain and is responsible for transferring electrons from succinate to ubiquinone (coenzyme Q). Mediates resistance to enteropathogenic E.coli infection. The protein is Succinate dehydrogenase cytochrome b560 subunit, mitochondrial (mev-1) of Caenorhabditis elegans.